The primary structure comprises 284 residues: Polyamine aminopropyltransferase (284 aa).

In terms of domain architecture, PABS spans Glu2 to Lys237. Gln31 is a binding site for S-methyl-5'-thioadenosine. Positions 62 and 86 each coordinate spermidine. Residues Glu106 and Asp137–Gly138 each bind S-methyl-5'-thioadenosine. Asp155 acts as the Proton acceptor in catalysis. Asp155 to Asp158 contributes to the spermidine binding site. Pro162 serves as a coordination point for S-methyl-5'-thioadenosine.

It belongs to the spermidine/spermine synthase family. Homodimer or homotetramer.

Its subcellular location is the cytoplasm. The enzyme catalyses S-adenosyl 3-(methylsulfanyl)propylamine + putrescine = S-methyl-5'-thioadenosine + spermidine + H(+). It functions in the pathway amine and polyamine biosynthesis; spermidine biosynthesis; spermidine from putrescine: step 1/1. In terms of biological role, catalyzes the irreversible transfer of a propylamine group from the amino donor S-adenosylmethioninamine (decarboxy-AdoMet) to putrescine (1,4-diaminobutane) to yield spermidine. The polypeptide is Polyamine aminopropyltransferase (Clostridium beijerinckii (strain ATCC 51743 / NCIMB 8052) (Clostridium acetobutylicum)).